We begin with the raw amino-acid sequence, 105 residues long: UPF0145 protein CPS_2458 (105 aa).

Belongs to the UPF0145 family.

The chain is UPF0145 protein CPS_2458 from Colwellia psychrerythraea (strain 34H / ATCC BAA-681) (Vibrio psychroerythus).